A 563-amino-acid polypeptide reads, in one-letter code: Arginine--tRNA ligase (563 aa).

A 'HIGH' region motif is present at residues 121-131 (PNIAKPFSIGH).

Belongs to the class-I aminoacyl-tRNA synthetase family. Monomer.

The protein localises to the cytoplasm. The catalysed reaction is tRNA(Arg) + L-arginine + ATP = L-arginyl-tRNA(Arg) + AMP + diphosphate. This chain is Arginine--tRNA ligase, found in Streptococcus agalactiae serotype III (strain NEM316).